We begin with the raw amino-acid sequence, 200 residues long: Cuticle protein 21.3 (200 aa).

10 repeat units span residues 98-101 (AAPA), 104-107 (AAPA), 116-119 (AAPA), 121-124 (AAPA), 133-136 (AAPA), 154-157 (AAPA), 166-169 (AAPA), 178-181 (AAPA), 184-187 (AAPA), and 196-199 (AAPA).

Its function is as follows. Component of the cuticle of migratory locust which contains more than 100 different structural proteins. The protein is Cuticle protein 21.3 of Locusta migratoria (Migratory locust).